The primary structure comprises 156 residues: Proline dehydrogenase transcriptional activator (156 aa).

The HTH asnC-type domain occupies 10–71; the sequence is LDHFDLKILE…VLNPQKLGVD (62 aa). Positions 29–48 form a DNA-binding region, H-T-H motif; sequence VLQLSKRVGLSKTPCQTRLK.

Functionally, transcriptional activator of the putA gene in response to proline. This is Proline dehydrogenase transcriptional activator (putR) from Rhizobium radiobacter (Agrobacterium tumefaciens).